Here is a 43-residue protein sequence, read N- to C-terminus: Thymosin beta-b (43 aa).

Basic and acidic residues-rich tracts occupy residues 1 to 25 and 33 to 43; these read MADK…ETQE and ETIEQEKQCEA. Residues 1–43 are disordered; sequence MADKPDISEVSQFDKTKLKKTETQEKNTLPTKETIEQEKQCEA.

The protein belongs to the thymosin beta family.

It is found in the cytoplasm. The protein resides in the cytoskeleton. Plays an important role in the organization of the cytoskeleton. Binds to and sequesters actin monomers (G actin) and therefore inhibits actin polymerization. The protein is Thymosin beta-b of Cyprinus carpio (Common carp).